Reading from the N-terminus, the 489-residue chain is WRKY transcription factor 72B (489 aa).

3 disordered regions span residues 1–100 (MENK…EMRE), 131–159 (QKET…QEAD), and 234–267 (DENE…RARV). Basic and acidic residues-rich tracts occupy residues 32–52 (GRKE…KDYM) and 83–100 (THKE…EMRE). Residues 84-132 (HKEQDDQLASAKDEMREVMEENQRLRMHLDRMMKEYRNLQNQFHDIVQK) are a coiled coil. Residues 138–147 (SSSTTVNTST) show a composition bias toward low complexity. The segment at residues 273 to 339 (CDAPTMNDGC…YEGTHNHTLP (67 aa)) is a DNA-binding region (WRKY). Disordered regions lie at residues 356–381 (LLSG…PTTT) and 427–454 (TSTS…YNYN). 2 stretches are compositionally biased toward low complexity: residues 371–381 (TATTTTTPTTT) and 427–438 (TSTSSSSPSSLS).

This sequence belongs to the WRKY group II-b family.

It localises to the nucleus. Functionally, in association with WRKY72A, contributes to basal defense against root-knot nematodes (RKNs) and potato aphids, as well as Mi-1-mediated gene-for-gene resistance to these pests. Both WRKY72A and WRKY72B are not required for gene-for-gene resistance mediated by Pto, another tomato R gene. This chain is WRKY transcription factor 72B, found in Solanum lycopersicum (Tomato).